The following is a 448-amino-acid chain: Exodeoxyribonuclease 7 large subunit (448 aa).

It belongs to the XseA family. As to quaternary structure, heterooligomer composed of large and small subunits.

The protein localises to the cytoplasm. It carries out the reaction Exonucleolytic cleavage in either 5'- to 3'- or 3'- to 5'-direction to yield nucleoside 5'-phosphates.. Bidirectionally degrades single-stranded DNA into large acid-insoluble oligonucleotides, which are then degraded further into small acid-soluble oligonucleotides. In Histophilus somni (strain 129Pt) (Haemophilus somnus), this protein is Exodeoxyribonuclease 7 large subunit.